The primary structure comprises 318 residues: Homoserine kinase (318 aa).

97-107 (PIGSGLGSSAC) provides a ligand contact to ATP.

Belongs to the GHMP kinase family. Homoserine kinase subfamily.

The protein resides in the cytoplasm. It catalyses the reaction L-homoserine + ATP = O-phospho-L-homoserine + ADP + H(+). The protein operates within amino-acid biosynthesis; L-threonine biosynthesis; L-threonine from L-aspartate: step 4/5. Its function is as follows. Catalyzes the ATP-dependent phosphorylation of L-homoserine to L-homoserine phosphate. The sequence is that of Homoserine kinase from Aliivibrio fischeri (strain MJ11) (Vibrio fischeri).